The sequence spans 310 residues: Porphobilinogen deaminase (310 aa).

Cysteine 241 is modified (S-(dipyrrolylmethanemethyl)cysteine).

It belongs to the HMBS family. As to quaternary structure, monomer. Dipyrromethane is required as a cofactor.

It catalyses the reaction 4 porphobilinogen + H2O = hydroxymethylbilane + 4 NH4(+). The protein operates within porphyrin-containing compound metabolism; protoporphyrin-IX biosynthesis; coproporphyrinogen-III from 5-aminolevulinate: step 2/4. In terms of biological role, tetrapolymerization of the monopyrrole PBG into the hydroxymethylbilane pre-uroporphyrinogen in several discrete steps. The protein is Porphobilinogen deaminase of Pelobacter propionicus (strain DSM 2379 / NBRC 103807 / OttBd1).